Reading from the N-terminus, the 54-residue chain is Putative collagen-like domain-containing protein 065L (54 aa).

A disordered region spans residues 1-54 (MRGLEAPGAVGPTGPSGAPGSQGPDGDVGGMGPEGPKGDDGPVGPKGPQGAAIF). One can recognise a Collagen-like domain in the interval 7-51 (PGAVGPTGPSGAPGSQGPDGDVGGMGPEGPKGDDGPVGPKGPQGA). Positions 26 to 35 (GDVGGMGPEG) are enriched in gly residues. Over residues 42 to 54 (PVGPKGPQGAAIF) the composition is skewed to low complexity.

This chain is Putative collagen-like domain-containing protein 065L, found in Dryophytes versicolor (chameleon treefrog).